The chain runs to 553 residues: Protein spartin (553 aa).

The 82-residue stretch at 15–96 (IRTAYKAAMT…ETELRYRLKV (82 aa)) folds into the MIT domain. The disordered stretch occupies residues 105–130 (DDSAVEATEESRAEMDTKRPPLLAEN). Residues 113–123 (EESRAEMDTKR) show a composition bias toward basic and acidic residues. Residues 325 to 509 (IVSAADFIAS…SQNVNYITPK (185 aa)) form the Senescence domain.

As to quaternary structure, interacts with Eps-15 (via C-terminal region); the interaction is required for spartin localization to the NMJ presynaptic membrane. In terms of tissue distribution, expressed in larval brain, ventral nerve cord and neuropil (at protein level).

It is found in the presynaptic cell membrane. It localises to the early endosome. The protein resides in the lipid droplet. Its function is as follows. During postembryonic development, functions with endocytic adapter Eps-15 in neurons to restrain synaptic growth, by inhibiting BMP signaling, and to control synaptic endocytosis. Required presynaptically for neuromuscular junction (NMJ) neurotransmission. Inhibits neuronal BMP signaling by promoting endocytic internalization and subsequent endosomal trafficking of the BMP receptor wit. In this way, regulates the Fmr1 translational regulator controlling Futsch expression to modulate neuronal microtubule stability, which controls both synaptogenesis and neuronal survival. The sequence is that of Protein spartin from Drosophila melanogaster (Fruit fly).